A 536-amino-acid polypeptide reads, in one-letter code: Apoptosis inhibitor 5 homolog (536 aa).

The disordered stretch occupies residues 462 to 536 (ITFGEKAAAN…GYRNRRFNKY (75 aa)). Residues 472-487 (GKDKDQEPEKKSRPSN) show a composition bias toward basic and acidic residues. Residues 498 to 507 (KYSNKVNQSY) are compositionally biased toward polar residues. Gly residues predominate over residues 516-528 (RGGGGGGGSGGGY).

Belongs to the API5 family.

Its subcellular location is the nucleus. Functionally, antiapoptotic factor. Also known to efficiently suppress E2F1-induced apoptosis. The sequence is that of Apoptosis inhibitor 5 homolog from Drosophila melanogaster (Fruit fly).